Reading from the N-terminus, the 168-residue chain is Protein GRE1 (168 aa).

The disordered stretch occupies residues 1–168 (MSNLLNKFAD…DDDSGNQGVW (168 aa)). Basic and acidic residues-rich tracts occupy residues 8–20 (FADK…HDER) and 27–43 (DQTR…REFR). Polar residues-rich tracts occupy residues 56 to 81 (NQGN…GNDF) and 120 to 144 (TSGQ…SNIG).

Its subcellular location is the cytoplasm. This is Protein GRE1 (GRE1) from Saccharomyces cerevisiae (strain ATCC 204508 / S288c) (Baker's yeast).